The sequence spans 880 residues: DNA mismatch repair protein MutS (880 aa).

An ATP-binding site is contributed by 624–631 (GPNMAGKS).

It belongs to the DNA mismatch repair MutS family.

This protein is involved in the repair of mismatches in DNA. It is possible that it carries out the mismatch recognition step. This protein has a weak ATPase activity. This chain is DNA mismatch repair protein MutS, found in Alkaliphilus metalliredigens (strain QYMF).